A 273-amino-acid polypeptide reads, in one-letter code: Dermonecrotic toxin LdSicTox-alphaIB1aiv (273 aa).

The active site involves His5. Mg(2+)-binding residues include Glu25 and Asp27. The active-site Nucleophile is the His41. Disulfide bonds link Cys45–Cys51 and Cys47–Cys190. Residue Asp85 coordinates Mg(2+). An N-linked (GlcNAc...) asparagine glycan is attached at Asn250.

The protein belongs to the arthropod phospholipase D family. Class II subfamily. Mg(2+) serves as cofactor. In terms of tissue distribution, expressed by the venom gland.

Its subcellular location is the secreted. It catalyses the reaction an N-(acyl)-sphingosylphosphocholine = an N-(acyl)-sphingosyl-1,3-cyclic phosphate + choline. The enzyme catalyses an N-(acyl)-sphingosylphosphoethanolamine = an N-(acyl)-sphingosyl-1,3-cyclic phosphate + ethanolamine. The catalysed reaction is a 1-acyl-sn-glycero-3-phosphocholine = a 1-acyl-sn-glycero-2,3-cyclic phosphate + choline. It carries out the reaction a 1-acyl-sn-glycero-3-phosphoethanolamine = a 1-acyl-sn-glycero-2,3-cyclic phosphate + ethanolamine. Dermonecrotic toxins cleave the phosphodiester linkage between the phosphate and headgroup of certain phospholipids (sphingolipid and lysolipid substrates), forming an alcohol (often choline) and a cyclic phosphate. This toxin acts on sphingomyelin (SM). It may also act on ceramide phosphoethanolamine (CPE), lysophosphatidylcholine (LPC) and lysophosphatidylethanolamine (LPE), but not on lysophosphatidylserine (LPS), and lysophosphatidylglycerol (LPG). It acts by transphosphatidylation, releasing exclusively cyclic phosphate products as second products. Induces dermonecrosis, hemolysis, increased vascular permeability, edema, inflammatory response, and platelet aggregation. In Loxosceles deserta (Desert recluse spider), this protein is Dermonecrotic toxin LdSicTox-alphaIB1aiv.